We begin with the raw amino-acid sequence, 227 residues long: TMF-regulated nuclear protein 1 (227 aa).

Disordered regions lie at residues 1 to 72 and 200 to 227; these read MPGC…ELQR and GRLR…SPQR. Over residues 22-55 the composition is skewed to pro residues; it reads SPPPPWDPMPSSQPPPPTPTLTPTPTPGQSPPLP.

Interacts with TMF1; may regulate TRNP1 proteasomal degradation. Ubiquitinated, leading to its degradation by the proteasome.

It is found in the nucleus. Its function is as follows. DNA-binding factor that regulates the expression of a subset of genes and plays a key role in tangential, radial, and lateral expansion of the brain neocortex. Regulates neural stem cells proliferation and the production of intermediate neural progenitors and basal radial glial cells affecting the process of cerebral cortex gyrification. May control the proliferation rate of cells by regulating their progression through key cell-cycle transition points. The protein is TMF-regulated nuclear protein 1 (TRNP1) of Homo sapiens (Human).